The sequence spans 1065 residues: NLR family CARD domain-containing protein 3 (1065 aa).

A compositionally biased stretch (basic and acidic residues) spans 1-10 (MRKQEVRTGR). The tract at residues 1-62 (MRKQEVRTGR…PLGPCSNDSR (62 aa)) is disordered. An NACHT domain is found at 139–460 (RVSITIGVAG…YCFTHLSLQE (322 aa)). 145–152 (GVAGMGKT) provides a ligand contact to ATP. Residues 457 to 460 (SLQE) carry the TRAF6-binding motif. 16 LRR repeats span residues 617-639 (EANL…LLYC), 641-663 (KLRL…VLSG), 665-688 (DCRI…ALAR), 693-716 (NRSL…ALAD), 721-744 (NRTL…SMAE), 749-772 (NRTL…RMAD), 777-800 (NRSL…ALAE), 805-828 (NQGL…ALMG), 833-856 (NQTL…AIAH), 861-884 (NSTL…AIAV), 889-912 (NRTL…ALGQ), 917-940 (NRSL…AVAR), 945-968 (NTAL…VLGE), 973-996 (NRTL…ALAN), 1001-1029 (NSSL…LSGN), and 1031-1052 (RLQH…MISE).

The protein belongs to the NLRP family. As to quaternary structure, directly interacts (via CARD) with TMEM173/STING; this interaction reduces TMEM173 trafficking to the perinuclear region in response to interferon stimulatory DNA. Also interacts, but to a lesser extent, with TBK1. Interacts with TRAF6; this interaction results in decreased TRAF6 'Lys-63'-linked polyubiquitination, but leaves 'Lys-48'-linked chains unchanged, promoting TRAF6 protein degradation. Interacts with PIK3R1/PIK3R2; this interaction disrupts the association between PIK3R1/PIK3R2 and the p110 catalytic subunit PIK3CA/PIK3CB/PIK3CD and reduces PIK3R1/PIK3R2 activation. Weakly interacts with PYCARD/ASC. Interacts with CASP1 and CASP5.

Its subcellular location is the cytoplasm. Functionally, negative regulator of the innate immune response. Attenuates signaling pathways activated by Toll-like receptors (TLRs) and the DNA sensor STING/TMEM173 in response to pathogen-associated molecular patterns, such as intracellular poly(dA:dT), but not poly(I:C), or in response to DNA virus infection, including that of Herpes simplex virus 1 (HSV1). May affect TLR4 signaling by acting at the level of TRAF6 ubiquitination, decreasing the activating 'Lys-63'-linked ubiquitination and leaving unchanged the degradative 'Lys-48'-linked ubiquitination. Inhibits the PI3K-AKT-mTOR pathway possibly by directly interacting with the posphatidylinositol 3-kinase regulatory subunit p85 (PIK3R1/PIK3R2) and disrupting the association between PIK3R1/PIK3R2 and the catalytic subunit p110 (PIK3CA/PIK3CB/PIK3CD) and reducing PIK3R1/PIK3R2 activation. Via its regulation of the PI3K-AKT-mTOR pathway, controls cell proliferation, predominantly in intestinal epithelial cells. May also affect NOD1- or NOD2-mediated NF-kappa-B activation. Might also affect the inflammatory response by preventing NLRP3 inflammasome formation, CASP1 cleavage and IL1B maturation. The sequence is that of NLR family CARD domain-containing protein 3 (NLRC3) from Homo sapiens (Human).